The chain runs to 659 residues: Cyclic-di-AMP phosphodiesterase GdpP (659 aa).

The Cytoplasmic portion of the chain corresponds to 1–8; it reads MPSFYEKP. Helical transmembrane passes span 9–29 and 30–50; these read LFRY…LISF and YFNW…LFFI. The Cytoplasmic segment spans residues 51-659; it reads KRADSLIRQE…DEYFEGGVQR (609 aa). The interval 84–149 is PAS-like domain, required for heme-binding; that stretch reads PIGIMLFNDQ…NDRKFRVVIK (66 aa). The 129-residue stretch at 173 to 301 folds into the GGDEF domain; the sequence is ERTVLAYIFL…GGDQVAIKLP (129 aa). Residues 339–496 form a DHH domain region; sequence NVIIMGHKFP…IEATALLAGI (158 aa). Residues H345, D349, D351, D420, H444, and D499 each coordinate Mn(2+). A DHHA1 domain region spans residues 591–646; the sequence is FAVARRDEQTVCISARSLGEVNVQIIMEALEGGGHLTNAATQLSGISVSEALERLK.

It belongs to the GdpP/PdeA phosphodiesterase family. The cofactor is heme b. Requires Mg(2+) as cofactor. Mn(2+) is required as a cofactor.

It is found in the cell membrane. It catalyses the reaction 3',3'-c-di-AMP + H2O = 5'-O-phosphonoadenylyl-(3'-&gt;5')-adenosine + H(+). With respect to regulation, phosphodiesterase (PDE) inhibited by Zn(2+), Ca(2+) inhibits in the presence of Mg(2+) but not Mn(2+); c-di-AMP PDE activity is competitively inhibited by ppGpp. Heme binding (by Fe(2+) or Fe(3+) heme) inhibits PDE, activity is partially restored by KCN or NO only for Fe(2+) heme. Binding of NO to Fe(2+) heme switches from hexa- to pentacoordination. Heme binding inhibits the ATPase activity. Its function is as follows. Has phosphodiesterase (PDE) activity against cyclic-di-AMP (c-di-AMP) and to a much lesser extent against cyclic-di-GMP (c-di-GMP) in the DHH/DHHA1 domains. Also has ATPase activity, probably via the GGDEF domain. Overexpression leads to increased sensitivity to methyl methanesulfonate (MMS) and H(2)O(2). Overexpression leads to extreme sensitivity to the beta-lactam antibiotic cefuroxime (CEF), probably dependent on PDE activity. May monitor cellular heme or NO levels. In B.subtilis c-di-AMP is a second messenger that mediates growth, DNA repair and cell wall homeostasis; it is toxic when present in excess. In Bacillus subtilis (strain 168), this protein is Cyclic-di-AMP phosphodiesterase GdpP.